The following is a 465-amino-acid chain: GTPase Der (465 aa).

2 EngA-type G domains span residues 3–167 (PLVA…PEEG) and 179–352 (IRIA…ESAN). Residues 9–16 (GRPNVGKS), 57–61 (DTGGI), 119–122 (NKID), 185–192 (GRPNVGKS), 232–236 (DTAGL), and 297–300 (NKWD) contribute to the GTP site. Residues 353 to 437 (KTFTTSEVNK…PVSFIFREGT (85 aa)) enclose the KH-like domain.

It belongs to the TRAFAC class TrmE-Era-EngA-EngB-Septin-like GTPase superfamily. EngA (Der) GTPase family. In terms of assembly, associates with the 50S ribosomal subunit.

In terms of biological role, GTPase that plays an essential role in the late steps of ribosome biogenesis. The protein is GTPase Der of Stenotrophomonas maltophilia (strain K279a).